Here is a 632-residue protein sequence, read N- to C-terminus: Palmitoyltransferase ZDHHC17 (632 aa).

At 1–304 (MQREEGFNTK…LKADKEFRQK (304 aa)) the chain is on the cytoplasmic side. The tract at residues 11-305 (MADGPDEYET…KADKEFRQKV (295 aa)) is necessary and sufficient for interaction with DNAJC5 and SNAP25. 7 ANK repeats span residues 51–86 (THIDDYSTWDIVKATQYGIYERCRELVEAGYDVRQP), 89–118 (ENVTLLHWAAINNRIDLVKYYISKGAIVDQ), 123–152 (LNSTPLHWATRQGHLSMVVQLMKYGADPSL), 156–185 (EGCSCIHLAAQFGHTSIVAYLIAKGQDVDM), 189–219 (NGMTPLMWAAYRTHSVDPTRLLLTFNVSVNL), 224–253 (HKNTALHWAVLAGNTTVISLLLEAGGNVDA), and 257–286 (KGESALDLAKQRKNVWMINHLQEARQAKGY). A run of 2 helical transmembrane segments spans residues 305-325 (VMLGTPFLVIWLVGFIADLDI) and 326-346 (DSWLIKGLMYGGVWATVQFLS). Topologically, residues 347–357 (KSFFDHSMHSA) are cytoplasmic. A helical transmembrane segment spans residues 358–378 (LPLGIYLATKFWMYVTWFFWF). The Lumenal portion of the chain corresponds to 379 to 381 (WND). A helical transmembrane segment spans residues 382–402 (LNFLFIHLPFLANSVALFYNF). At 403–480 (GKSWKSDPGI…GNCVGAGNHR (78 aa)) the chain is on the cytoplasmic side. The 51-residue stretch at 437–487 (IFCSTCLIRKPVRSKHCGVCNRCIAKFDHHCPWVGNCVGAGNHRYFMGYLF) folds into the DHHC domain. Cys-467 (S-palmitoyl cysteine intermediate) is an active-site residue. Residues 481–501 (YFMGYLFFLLFMICWMIYGCV) form a helical membrane-spanning segment. At 502 to 529 (SYWGLHCETTYTKDGFWTYITQIATCSP) the chain is on the lumenal side. The helical transmembrane segment at 530-550 (WMFWMFLNSVFHFLWVAVLLM) threads the bilayer. Residues 551-632 (CQLYQITCLG…QISGSGYQLV (82 aa)) lie on the Cytoplasmic side of the membrane.

Belongs to the DHHC palmitoyltransferase family. AKR/ZDHHC17 subfamily. As to quaternary structure, interacts (via ANK repeats) with numerous proteins (via the consensus sequence motif [VIAP]-[VIT]-x-x-Q-P). Interacts (via ANK repeats) with CLIP3. Interacts (via ANK repeats) with HTT. Interacts (via ANK repeats) with DNAJC5 (via C-terminus). Interacts (via ANK repeats) with MAP6. Interacts (via ANK repeats) with SNAP23. Interacts (via ANK repeats) with SNAP25. Interacts (via ANK repeats) with EVL. Interacts with SPRED1 and SPRED3. Interacts with GPM6A and OPTN. May interact (via ANK repeats) with SPRED2. May interact with NTRK1; may regulate its localization and function. Autopalmitoylated. Autopalmitoylation has a regulatory role in ZDHHC17-mediated Mg(2+) transport. As to expression, expressed in liver, testis, kidney, heart, pancreas and brain. Highest expression was seen in the brain. Localized predominantly in the perinuclear regions of neurons from the cortex, striatum and hippocampus. Colocalized with HTT in the medium spiny neurons of the striatum and the spiny neurons that project into the globus pallidus.

It is found in the golgi apparatus membrane. It localises to the cytoplasmic vesicle membrane. Its subcellular location is the presynaptic cell membrane. It carries out the reaction L-cysteinyl-[protein] + hexadecanoyl-CoA = S-hexadecanoyl-L-cysteinyl-[protein] + CoA. It catalyses the reaction L-cysteinyl-[protein] + tetradecanoyl-CoA = S-tetradecanoyl-L-cysteinyl-[protein] + CoA. The enzyme catalyses L-cysteinyl-[protein] + octadecanoyl-CoA = S-octadecanoyl-L-cysteinyl-[protein] + CoA. Its function is as follows. Palmitoyltransferase that catalyzes the addition of palmitate onto various protein substrates and is involved in a variety of cellular processes. Has no stringent fatty acid selectivity and in addition to palmitate can also transfer onto target proteins myristate from tetradecanoyl-CoA and stearate from octadecanoyl-CoA. Palmitoyltransferase specific for a subset of neuronal proteins, including SNAP25, DLG4/PSD95, GAD2, SYT1 and HTT. Also palmitoylates neuronal protein GPM6A as well as SPRED1 and SPRED3. Could also play a role in axonogenesis through the regulation of NTRK1 and the downstream ERK1/ERK2 signaling cascade. May be involved in the sorting or targeting of critical proteins involved in the initiating events of endocytosis at the plasma membrane. May play a role in Mg(2+) transport. Could also palmitoylate DNAJC5 and regulate its localization to the Golgi membrane. Palmitoylates CASP6, thereby preventing its dimerization and subsequent activation. The polypeptide is Palmitoyltransferase ZDHHC17 (Mus musculus (Mouse)).